Reading from the N-terminus, the 130-residue chain is Small ribosomal subunit protein uS9 (130 aa).

Belongs to the universal ribosomal protein uS9 family.

This Magnetococcus marinus (strain ATCC BAA-1437 / JCM 17883 / MC-1) protein is Small ribosomal subunit protein uS9.